Consider the following 842-residue polypeptide: Glucans biosynthesis glucosyltransferase H (842 aa).

The next 8 membrane-spanning stretches (helical) occupy residues 140–160 (ILLL…KTIL), 194–214 (ILIL…TALM), 513–533 (VFLT…FLAL), 568–588 (IALF…SIIL), 600–620 (FIRV…LAPV), 622–642 (MLFH…VWNS), 656–676 (FMRH…MAWL), and 680–700 (FLFW…VSAI).

Belongs to the glycosyltransferase 2 family. OpgH subfamily.

The protein localises to the cell inner membrane. It functions in the pathway glycan metabolism; osmoregulated periplasmic glucan (OPG) biosynthesis. Its function is as follows. Involved in the biosynthesis of osmoregulated periplasmic glucans (OPGs). In Klebsiella pneumoniae (strain 342), this protein is Glucans biosynthesis glucosyltransferase H.